A 402-amino-acid polypeptide reads, in one-letter code: MTNPKLVLAYSGGLDTSVAIKWLQERGYDVIACCLDLGEGKDLDFVKEKALKVGAIKSYVIDVKEEFADEYALIALQAHALYEGKYPLVSALSRPLIAKKLVEIAELEGAVAVAHGCTGKGNDQVRFEVSIKALNPNLEVIAPVREWSWSREEEIEYAKKHGIPIPVDLDSPFSIDQNLWGRSNECGILEDPWAAPPEEAYELTAALENTPDVPEIIEIGFEQGVPKTLNGKPYSLASLILELNAIAGKHGVGRIDHVENRLVGIKSREVYECPGAMTLIKAHKELEDLTLVKEVAHFKPIIEQKLAEVIYNGLWFSPIKDALVAFLKETQKNVTGVVRVKLFKGHAIIEGRKSEFSLYDEKLATYTADDQFDHQAAVGFISLYGLPTKVYSIVNNQKKVNV.

Residue 9 to 17 (AYSGGLDTS) participates in ATP binding. Residue Tyr-86 coordinates L-citrulline. Gly-116 is an ATP binding site. Thr-118, Asn-122, and Asp-123 together coordinate L-aspartate. Residue Asn-122 participates in L-citrulline binding. L-citrulline-binding residues include Arg-126, Ser-174, Ser-183, Glu-259, and Tyr-271.

Belongs to the argininosuccinate synthase family. Type 1 subfamily. As to quaternary structure, homotetramer.

Its subcellular location is the cytoplasm. It catalyses the reaction L-citrulline + L-aspartate + ATP = 2-(N(omega)-L-arginino)succinate + AMP + diphosphate + H(+). Its pathway is amino-acid biosynthesis; L-arginine biosynthesis; L-arginine from L-ornithine and carbamoyl phosphate: step 2/3. The protein is Argininosuccinate synthase of Geobacillus sp. (strain WCH70).